The sequence spans 164 residues: Protein SprT (164 aa).

In terms of domain architecture, SprT-like spans 13–156 (YQQAEAFFKR…LCRRCREPLV (144 aa)). Residue H69 coordinates Zn(2+). The active site involves E70. Position 73 (H73) interacts with Zn(2+).

Belongs to the SprT family. The cofactor is Zn(2+).

It is found in the cytoplasm. This Pseudomonas syringae pv. syringae (strain B728a) protein is Protein SprT.